The chain runs to 300 residues: m7GpppN-mRNA hydrolase NUDT17 (300 aa).

Residues 88 to 239 (SRGVDVGVAV…KECVQIPADL (152 aa)) form the Nudix hydrolase domain. A Nudix box motif is present at residues 127 to 148 (GHVELDEKLLDAGLRELLEETG). The Mg(2+) site is built by E142 and E146.

This sequence belongs to the Nudix hydrolase family. Mg(2+) is required as a cofactor. The cofactor is Mn(2+).

The catalysed reaction is a 5'-end (N(7)-methyl 5'-triphosphoguanosine)-ribonucleoside in mRNA + H2O = N(7)-methyl-GDP + a 5'-end phospho-ribonucleoside in mRNA + 2 H(+). Its function is as follows. Acts as a decapping enzyme capable of hydrolyzing monomethylated capped RNAs (in vitro). Hydrolyzes monomethylated capped RNA after alpha and beta phosphates to form N(7)-methyl-GDP. Shows low activity towards unmethylated capped RNA. This is m7GpppN-mRNA hydrolase NUDT17 (nudt17) from Danio rerio (Zebrafish).